Here is a 322-residue protein sequence, read N- to C-terminus: Acetyl-coenzyme A carboxylase carboxyl transferase subunit alpha (322 aa).

The region spanning 30 to 293 (ALDISAEITR…RQALQESLRK (264 aa)) is the CoA carboxyltransferase C-terminal domain.

Belongs to the AccA family. Acetyl-CoA carboxylase is a heterohexamer composed of biotin carboxyl carrier protein (AccB), biotin carboxylase (AccC) and two subunits each of ACCase subunit alpha (AccA) and ACCase subunit beta (AccD).

The protein resides in the cytoplasm. It carries out the reaction N(6)-carboxybiotinyl-L-lysyl-[protein] + acetyl-CoA = N(6)-biotinyl-L-lysyl-[protein] + malonyl-CoA. The protein operates within lipid metabolism; malonyl-CoA biosynthesis; malonyl-CoA from acetyl-CoA: step 1/1. Functionally, component of the acetyl coenzyme A carboxylase (ACC) complex. First, biotin carboxylase catalyzes the carboxylation of biotin on its carrier protein (BCCP) and then the CO(2) group is transferred by the carboxyltransferase to acetyl-CoA to form malonyl-CoA. This chain is Acetyl-coenzyme A carboxylase carboxyl transferase subunit alpha, found in Nitrosomonas eutropha (strain DSM 101675 / C91 / Nm57).